The primary structure comprises 597 residues: Gamma-terpinene synthase, chloroplastic (597 aa).

The transit peptide at 1 to 47 (MATLSMQVSILSKQVKNLNSFGMRASKLPMVARRVDVSTTRLRPICS) directs the protein to the chloroplast. Mn(2+) contacts are provided by Asp350 and Asp354. The DDXXD motif motif lies at 350 to 354 (DDVYD). Homodimerization stretches follow at residues 356-362 (YGTLDEL) and 428-464 (EAKWYYAGYTPTLAEYLENAKVSISSPTIISQVYFTL). Residues Asp494 and Glu502 each coordinate Mn(2+).

The protein belongs to the terpene synthase family. In terms of assembly, homodimer. Requires Mn(2+) as cofactor. The cofactor is Mg(2+).

Its subcellular location is the plastid. It is found in the chloroplast. The catalysed reaction is (2E)-geranyl diphosphate = gamma-terpinene + diphosphate. It functions in the pathway secondary metabolite biosynthesis; terpenoid biosynthesis. In terms of biological role, involved in the biosynthesis of phenolic monoterpenes natural products thymol and carvacrol which have a broad range of biological activities acting as antimicrobial compounds, insecticides, antioxidants and pharmaceutical agents. Monoterpene synthase which catalyzes the conversion of geranyl diphosphate (GPP) to gamma-terpinene. The chain is Gamma-terpinene synthase, chloroplastic from Thymus caespititius (Cretan thyme).